We begin with the raw amino-acid sequence, 175 residues long: Ribosome maturation factor RimM (175 aa).

Residues 94 to 166 (SDSWYEHELI…FIRLVPPGGL (73 aa)) form the PRC barrel domain.

The protein belongs to the RimM family. In terms of assembly, binds ribosomal protein uS19.

The protein localises to the cytoplasm. Its function is as follows. An accessory protein needed during the final step in the assembly of 30S ribosomal subunit, possibly for assembly of the head region. Essential for efficient processing of 16S rRNA. May be needed both before and after RbfA during the maturation of 16S rRNA. It has affinity for free ribosomal 30S subunits but not for 70S ribosomes. In Renibacterium salmoninarum (strain ATCC 33209 / DSM 20767 / JCM 11484 / NBRC 15589 / NCIMB 2235), this protein is Ribosome maturation factor RimM.